We begin with the raw amino-acid sequence, 757 residues long: MTTLHILGFPRVGAKRELKFAQERYWRKELAEQDLLDLAKALREKNWLHQAQADADFVTVGDFTFYDHILDLQVATGAIPARFGFDSQTLSLDQYFQLARGNKEQFAIEMTKWFDTNYHYLVPEFQKNTTFKANPTHYVNQIREAKAAGHQVKPVIVGPLTFLWLGKEKGEAFNRFDLLKQLVPIYFEILTALAAEGVEWIQIDEPALALDLPQEWLAAYQDVYAQLAKVNAKLLLATYFGSVAEHADLLKALPVDGLHLDLVRAPEQLSAFEDYPKVLSAGVIDGRNIWRANLNRVLDVLEPLKAKFNQRLWIAPSCSLLHTPYDLAVETQLQQNNPELYRWLAFTLQKVAELQVLKQALNAGRDAVTEQLNDSQTAADARANSNVIHKAEVAQRLANLPANADKRQSPFAERIKLQNKWLNLPLLPTTNIGSFPQTLEIRHARAAFKKGELSLADYEAAMKKEIEFVVRKQEELDLDVLVHGEGERNDMVEYFGELLDGFAFTKFGWVQSYGSRCVKPPVIYGDVTRPEPMTVRWSQYAQSLTDKVMKGMLTGPVTILQWSFVRNDIPRSTVCKQIGVALSDEVLDLEKAGIKVIQIDEPAIREGLPLKRADWDAYLQWAGEAFRLSYMGVKDDTQIHTHMCYSEFNDILPAIAGLDADVITIETSRSDMELLTAFADFKYPNDIGPGVYDIHSPRVPTAGEIEHLLRKALKVIPKERLWVNPDCGLKTRGWKETIEQLQVMVEVTKKLRAELAE.

Residues R16 to K19 and K112 contribute to the 5-methyltetrahydropteroyltri-L-glutamate site. L-homocysteine-binding positions include I432 to S434 and E485. Residues I432–S434 and E485 each bind L-methionine. Residues R516 to C517 and W562 each bind 5-methyltetrahydropteroyltri-L-glutamate. D600 is a binding site for L-homocysteine. D600 contributes to the L-methionine binding site. E606 is a binding site for 5-methyltetrahydropteroyltri-L-glutamate. Zn(2+) is bound by residues H642, C644, and E666. H695 serves as the catalytic Proton donor. Residue C727 participates in Zn(2+) binding.

Belongs to the vitamin-B12 independent methionine synthase family. It depends on Zn(2+) as a cofactor.

It catalyses the reaction 5-methyltetrahydropteroyltri-L-glutamate + L-homocysteine = tetrahydropteroyltri-L-glutamate + L-methionine. The protein operates within amino-acid biosynthesis; L-methionine biosynthesis via de novo pathway; L-methionine from L-homocysteine (MetE route): step 1/1. Catalyzes the transfer of a methyl group from 5-methyltetrahydrofolate to homocysteine resulting in methionine formation. This chain is 5-methyltetrahydropteroyltriglutamate--homocysteine methyltransferase, found in Actinobacillus pleuropneumoniae serotype 5b (strain L20).